We begin with the raw amino-acid sequence, 101 residues long: MEKIGIDTAFAEPGVRLSINLRERCRMHDLNEALDDLRAVIPYAHGGSVRKLSKIATLLLAKNHIIMQAKAIEELSILVSQLKRKSENLENLNKSLKPDAN.

Residues 14 to 27 (GVRLSINLRERCRM) form a basic motif region. One can recognise a bHLH domain in the interval 14–68 (GVRLSINLRERCRMHDLNEALDDLRAVIPYAHGGSVRKLSKIATLLLAKNHIIMQ). The tract at residues 28 to 68 (HDLNEALDDLRAVIPYAHGGSVRKLSKIATLLLAKNHIIMQ) is helix-loop-helix motif.

As to expression, expressed in neuronal tissues of the head, including sheath cells of the cephalic sensilla (CEPsh) glia.

The protein resides in the nucleus. Probable transcription factor that regulates the expression of dopamine receptors dop-1, dop-2 and dop-3 and thus dopamine-dependent behaviors. May act redundantly with hlh-31 and hlh-32 to regulate ventral CEPsh glia functions. May play a role in chemotactic responses in larvae. This Caenorhabditis elegans protein is Helix-loop-helix protein 17.